The sequence spans 155 residues: Small ribosomal subunit protein uS7 (155 aa).

Belongs to the universal ribosomal protein uS7 family. As to quaternary structure, part of the 30S ribosomal subunit. Contacts proteins S9 and S11.

Functionally, one of the primary rRNA binding proteins, it binds directly to 16S rRNA where it nucleates assembly of the head domain of the 30S subunit. Is located at the subunit interface close to the decoding center, probably blocks exit of the E-site tRNA. The sequence is that of Small ribosomal subunit protein uS7 from Helicobacter acinonychis (strain Sheeba).